A 91-amino-acid polypeptide reads, in one-letter code: Small ribosomal subunit protein bS18 (91 aa).

It belongs to the bacterial ribosomal protein bS18 family. Part of the 30S ribosomal subunit. Forms a tight heterodimer with protein bS6.

Binds as a heterodimer with protein bS6 to the central domain of the 16S rRNA, where it helps stabilize the platform of the 30S subunit. The protein is Small ribosomal subunit protein bS18 of Burkholderia multivorans (strain ATCC 17616 / 249).